Consider the following 1239-residue polypeptide: Potassium channel subfamily T member 1 (1239 aa).

Positions 1–45 (MARAKLPRSPSEGKAGPGDTPAGSAAPEEPHGLSPLLPTRGGGSV) are disordered. Over 1–93 (MARAKLPRSP…LFFIKNQRSS (93 aa)) the chain is Cytoplasmic. A helical membrane pass occupies residues 94–126 (LRIRLFNFSLKLLTCLLYIVRVLLDNPDQGIGC). Over 127 to 153 (WGCTKYNYTFNGSSSEFHWAPILWVER) the chain is Extracellular. N133 and N137 each carry an N-linked (GlcNAc...) asparagine glycan. A helical transmembrane segment spans residues 154–178 (KMALWVIQVIVATISFLETMLLIYL). The Cytoplasmic segment spans residues 179 to 192 (SYKGNIWEQIFHVS). The chain crosses the membrane as a helical span at residues 193-208 (FVLEMINTLPFIITVF). The Extracellular portion of the chain corresponds to 209 to 215 (WPPLRNL). The chain crosses the membrane as a helical span at residues 216–233 (FIPVFLNCWLAKHALENM). Residues 234 to 246 (INDFHRAILRTQS) are Cytoplasmic-facing. The helical transmembrane segment at 247–274 (AMFNQVLILFCTLLCLVFTGTCGIQHLE) threads the bilayer. Residues 275–281 (RAGGNLN) lie on the Extracellular side of the membrane. The segment at residues 282–302 (LLTSFYFCIVTFSTVGFGDVT) is an intramembrane region (pore-forming). The K(+) site is built by V296 and G297. The Extracellular segment spans residues 303–304 (PK). A helical membrane pass occupies residues 305–338 (IWPSQLLVVILICVTLVVLPLQFEELVYLWMERQ). Residues 339–1239 (KSGGNYSRHR…NPETRDETQL (901 aa)) are Cytoplasmic-facing. In terms of domain architecture, RCK N-terminal 1 spans 352 to 488 (EKHVVLCVSS…FHVKFADHVV (137 aa)). 4 residues coordinate Na(+): L513, H516, S538, and N540. The interval 658-689 (QNTDCRPSQGGSGGGGGKLTLPTENGSGSRRP) is disordered. Zn(2+)-binding residues include C758 and C759. K(+)-binding residues include R761 and K764. Na(+)-binding residues include R761 and K764. Zn(2+)-binding residues include C766 and H768. K(+)-binding residues include N769, Y771, Y777, and G778. Residue Y771 coordinates Na(+). F779 contacts Na(+). Residues 781–921 (NKLIIVSAET…QFRAKDSYSL (141 aa)) enclose the RCK N-terminal 2 domain. 5 residues coordinate K(+): S787, L818, D820, G842, and D865. 2 disordered regions span residues 1053-1081 (REAK…ADPV) and 1212-1239 (TSSS…ETQL). The span at 1213-1230 (SSSQSRKSSCSNKLSSCN) shows a compositional bias: low complexity.

Belongs to the potassium channel family. Calcium-activated (TC 1.A.1.3) subfamily. KCa4.1/KCNT1 sub-subfamily. In terms of assembly, homotetramer; which constitutes the Na(+)-activated K(+) channel. Interacts with KCNT2; these heterodimer channels differ from the homomers in their unitary conductance, kinetic behavior, subcellular localization, and response to activation of protein kinase C. Interacts (via C-terminus) with FMR1; this interaction alters gating properties of KCNT1. Interacts with CRBN via its cytoplasmic C-terminus. Does not interact with KCNT2. Phosphorylated by protein kinase C. Phosphorylation of the C-terminal domain increases channel activity. In terms of tissue distribution, detected in brain and brainstem, in vestibular and oculomotor nuclei, the medial nucleus of the trapezoid in the auditory system, in olfactory bulb, red nucleus, and deep cerebellar nuclei. Detected in thalamus, substantia nigra, and amygdala (at protein level). Highly expressed in the brain and kidney.

The protein resides in the cell membrane. It catalyses the reaction K(+)(in) = K(+)(out). With respect to regulation, activated by high intracellular Na(+) level. In addition to activation by Na(+), is cooperatively activated by intracellular Cl(-) levels. Activated upon stimulation of G-protein coupled receptors, such as CHRM1 and GRIA1. In terms of biological role, sodium-activated K(+) channel. Acts as an important mediator of neuronal membrane excitability. Contributes to the delayed outward currents. Regulates neuronal bursting in sensory neurons. Contributes to synaptic development and plasticity. The polypeptide is Potassium channel subfamily T member 1 (Kcnt1) (Rattus norvegicus (Rat)).